The following is a 990-amino-acid chain: Protein argonaute 7 (990 aa).

Residues 1–13 (MEEKTHHHHHSTN) show a composition bias toward basic residues. Positions 1 to 25 (MEEKTHHHHHSTNKHIPSSKSRTPL) are disordered. One can recognise a PAZ domain in the interval 379–484 (EFLTDLPRNK…LPMELCMICE (106 aa)). One can recognise a Piwi domain in the interval 649–950 (LIICVMEKKH…AAYRGRLYIE (302 aa)). Positions 953 to 973 (SESNGGSMNPSSVSRVGPPKT) are disordered. Polar residues predominate over residues 954-966 (ESNGGSMNPSSVS).

This sequence belongs to the argonaute family. Ago subfamily. In terms of tissue distribution, expressed in leaves and floral buds, and at low levels in roots.

Functionally, involved in RNA-mediated post-transcriptional gene silencing (PTGS). Main component of the RNA-induced silencing complex (RISC) that binds to a short guide RNA such as a microRNA (miRNA) or small interfering RNA (siRNA). RISC uses the mature miRNA or siRNA as a guide for slicer-directed cleavage of homologous mRNAs to repress gene expression. Required for the processing of 21 nucleotide trans-acting siRNAs (ta-siRNAs) derived from TAS3a transcripts. Associates preferentially with the microRNA (miRNA) miR390 which guides the cleavage of TAS3 precursor RNA. Seems to act as miR390 specific slicer. Associates mainly with small RNAs of 21 nucleotide in length and with a 5' terminal adenosine. Acts in the RDR6/SGS3/DCL4/AGO7 trans-acting siRNA pathway involved in leaf developmental timing. Does not seem to act on leaf polarity. Required for the production of the 30-40nt bacterial-induced long siRNAs (lsiRNA). Involved in antiviral RNA silencing by contributing to efficient viral RNAs clearance. Targets less structured viral RNAs than AGO1 which is capable of targeting RNAs with more compact structures. This Arabidopsis thaliana (Mouse-ear cress) protein is Protein argonaute 7 (AGO7).